The primary structure comprises 175 residues: MRSQSLNFVASNTTSDFISNLLESNVINIIILISLLIYLGKRTIVTNLNDRKLNIQCSILEAEKKLSQAQLRLAEAEKKITESEEIISILKHEAKIAANKIKELIVNNAKRKIDKIILDGKTIIANTEIEIMNQIKNRIISTAIDKTKIKLTKNLQAETIERITDNKITFLNNNL.

The chain crosses the membrane as a helical span at residues 21-40 (LLESNVINIIILISLLIYLG).

This sequence belongs to the ATPase B chain family. F-type ATPases have 2 components, F(1) - the catalytic core - and F(0) - the membrane proton channel. F(1) has five subunits: alpha(3), beta(3), gamma(1), delta(1), epsilon(1). F(0) has four main subunits: a(1), b(1), b'(1) and c(10-14). The alpha and beta chains form an alternating ring which encloses part of the gamma chain. F(1) is attached to F(0) by a central stalk formed by the gamma and epsilon chains, while a peripheral stalk is formed by the delta, b and b' chains.

It is found in the plastid. The protein localises to the chloroplast thylakoid membrane. In terms of biological role, f(1)F(0) ATP synthase produces ATP from ADP in the presence of a proton or sodium gradient. F-type ATPases consist of two structural domains, F(1) containing the extramembraneous catalytic core and F(0) containing the membrane proton channel, linked together by a central stalk and a peripheral stalk. During catalysis, ATP synthesis in the catalytic domain of F(1) is coupled via a rotary mechanism of the central stalk subunits to proton translocation. Component of the F(0) channel, it forms part of the peripheral stalk, linking F(1) to F(0). This is ATP synthase subunit b, chloroplastic from Cyanidium caldarium (Red alga).